Here is a 263-residue protein sequence, read N- to C-terminus: UPF0758 protein NGR_c13970 (263 aa).

Residues 141-263 (VLSSWSAVID…HVSMKGLRLF (123 aa)) enclose the MPN domain. Positions 212, 214, and 225 each coordinate Zn(2+). The JAMM motif motif lies at 212–225 (HNHPSGDPTPSRAD).

Belongs to the UPF0758 family.

This chain is UPF0758 protein NGR_c13970, found in Sinorhizobium fredii (strain NBRC 101917 / NGR234).